A 317-amino-acid polypeptide reads, in one-letter code: Lipoyl synthase (317 aa).

Residues Cys-56, Cys-61, Cys-67, Cys-82, Cys-86, Cys-89, and Ser-298 each contribute to the [4Fe-4S] cluster site. Residues 68–287 (WEDREATFLI…KEEAEQIGFS (220 aa)) form the Radical SAM core domain.

This sequence belongs to the radical SAM superfamily. Lipoyl synthase family. [4Fe-4S] cluster serves as cofactor.

The protein resides in the cytoplasm. It carries out the reaction [[Fe-S] cluster scaffold protein carrying a second [4Fe-4S](2+) cluster] + N(6)-octanoyl-L-lysyl-[protein] + 2 oxidized [2Fe-2S]-[ferredoxin] + 2 S-adenosyl-L-methionine + 4 H(+) = [[Fe-S] cluster scaffold protein] + N(6)-[(R)-dihydrolipoyl]-L-lysyl-[protein] + 4 Fe(3+) + 2 hydrogen sulfide + 2 5'-deoxyadenosine + 2 L-methionine + 2 reduced [2Fe-2S]-[ferredoxin]. The protein operates within protein modification; protein lipoylation via endogenous pathway; protein N(6)-(lipoyl)lysine from octanoyl-[acyl-carrier-protein]: step 2/2. Functionally, catalyzes the radical-mediated insertion of two sulfur atoms into the C-6 and C-8 positions of the octanoyl moiety bound to the lipoyl domains of lipoate-dependent enzymes, thereby converting the octanoylated domains into lipoylated derivatives. This Streptomyces coelicolor (strain ATCC BAA-471 / A3(2) / M145) protein is Lipoyl synthase.